We begin with the raw amino-acid sequence, 299 residues long: MEELLPDGQIWANMDPEERMLAAATAFTHICAGQGEGDVRREAQSIQYDPYSKASVAPGKRPALPVQLQYPHVESNVPSETVSEASQRLRKPVMKRKVLRRKPDGEVLVTDESIISESESGTENDQDLWDLRQRLMNVQFQEDKESSFDVSQKFNLPHEYQGISQDQLICSLQREGMGSPAYEQDLIVASRPKSFILPKLDQLSRNRGKTDRVARYFEYKRDWDSIRLPGEDHRKELRWGVREQMLCRAEPQSKPQHIYVPNNYLVPTEKKRSALRWGVRCDLANGVIPRKLPFPLSPS.

Position 179 is a phosphoserine (Ser179).

This sequence belongs to the HYLS1 family.

The protein resides in the cytoplasm. It is found in the cell projection. The protein localises to the cilium. It localises to the cytoskeleton. Its subcellular location is the microtubule organizing center. The protein resides in the centrosome. It is found in the centriole. In terms of biological role, plays a role in ciliogenesis. This chain is Centriolar and ciliogenesis-associated protein HYLS1, found in Homo sapiens (Human).